The sequence spans 1728 residues: Protein NETWORKED 1A (1728 aa).

Positions 13–92 constitute an NAB domain; that stretch reads YSWWWDSHIP…ERYDHATVEL (80 aa). Coiled-coil stretches lie at residues 155-446, 476-827, 857-885, 954-1016, 1090-1323, 1403-1431, and 1576-1684; these read LGNS…LEIE, MLRD…QVEI, FSEKLIAELESENLEQQMEAEFLVHEIDN, QFQS…AELQ, EQAE…KETV, LLQDMKTRIKTIKQAVAEEKKRRGKLRRR, and RRLA…TKSK. The segment at 1419 to 1441 is disordered; the sequence is AEEKKRRGKLRRRSSSHRSKDRK. Residues 1424–1439 show a composition bias toward basic residues; it reads RRGKLRRRSSSHRSKD.

The protein belongs to the NET family. In terms of assembly, interacts with F-actin. As to expression, expressed in root meristems and at very low levels throughout mature vasculature.

It localises to the cytoplasm. The protein localises to the cytoskeleton. It is found in the cell membrane. The protein resides in the cell junction. Its subcellular location is the plasmodesma. Its function is as follows. Plant-specific actin binding protein. Associates with F-actin at the plasma membrane and plasmodesmata. May be part of a membrane-cytoskeletal adapter complex. In Arabidopsis thaliana (Mouse-ear cress), this protein is Protein NETWORKED 1A.